The primary structure comprises 314 residues: Probable cell division protein WhiA (314 aa).

The segment at residues 274–308 (SLKELGEMVSTGPISKSGMNHRLRKLNELADKIRN) is a DNA-binding region (H-T-H motif).

The protein belongs to the WhiA family.

Involved in cell division and chromosome segregation. The sequence is that of Probable cell division protein WhiA from Staphylococcus epidermidis (strain ATCC 35984 / DSM 28319 / BCRC 17069 / CCUG 31568 / BM 3577 / RP62A).